A 258-amino-acid polypeptide reads, in one-letter code: Imidazole glycerol phosphate synthase subunit HisF (258 aa).

Catalysis depends on residues D11 and D130.

The protein belongs to the HisA/HisF family. Heterodimer of HisH and HisF.

It localises to the cytoplasm. The enzyme catalyses 5-[(5-phospho-1-deoxy-D-ribulos-1-ylimino)methylamino]-1-(5-phospho-beta-D-ribosyl)imidazole-4-carboxamide + L-glutamine = D-erythro-1-(imidazol-4-yl)glycerol 3-phosphate + 5-amino-1-(5-phospho-beta-D-ribosyl)imidazole-4-carboxamide + L-glutamate + H(+). The protein operates within amino-acid biosynthesis; L-histidine biosynthesis; L-histidine from 5-phospho-alpha-D-ribose 1-diphosphate: step 5/9. Functionally, IGPS catalyzes the conversion of PRFAR and glutamine to IGP, AICAR and glutamate. The HisF subunit catalyzes the cyclization activity that produces IGP and AICAR from PRFAR using the ammonia provided by the HisH subunit. This chain is Imidazole glycerol phosphate synthase subunit HisF, found in Magnetococcus marinus (strain ATCC BAA-1437 / JCM 17883 / MC-1).